The primary structure comprises 346 residues: MLVLGIESSCDETGLALYDTQRGLLAHALHSQIAMHREYGGVVPELASRDHIRRALPLLEEVMAQSGTRRDDIDAIAFTQGPGLAGALLVGASIANALALAWNKPTVGIHHLEGHLLSPLLVDQPPPFPFVALLVSGGHTQLMRVTDVGVYETLGETLDDAAGEAFDKTAKLIGLGYPGGPEVSKLAETGTPGAVVLPRPMLHSGDLDFSFSGLKTAVLTQMKKFEAAKLEGEALERAKADLARGFVDAAVDVLVAKSLAALKKTKLKRLVVAGGVGANRQLRAALSAAAAKRGFDVHYPDLALCTDNGAMIALAGALRLGRWPEQANADYAFTVKPRWDLASLAR.

His-111 and His-115 together coordinate Fe cation. Substrate contacts are provided by residues 134–138, Asp-167, Gly-180, and Asn-279; that span reads LVSGG. Asp-307 contacts Fe cation.

This sequence belongs to the KAE1 / TsaD family. Fe(2+) is required as a cofactor.

It localises to the cytoplasm. The enzyme catalyses L-threonylcarbamoyladenylate + adenosine(37) in tRNA = N(6)-L-threonylcarbamoyladenosine(37) in tRNA + AMP + H(+). Required for the formation of a threonylcarbamoyl group on adenosine at position 37 (t(6)A37) in tRNAs that read codons beginning with adenine. Is involved in the transfer of the threonylcarbamoyl moiety of threonylcarbamoyl-AMP (TC-AMP) to the N6 group of A37, together with TsaE and TsaB. TsaD likely plays a direct catalytic role in this reaction. The protein is tRNA N6-adenosine threonylcarbamoyltransferase of Burkholderia lata (strain ATCC 17760 / DSM 23089 / LMG 22485 / NCIMB 9086 / R18194 / 383).